The primary structure comprises 116 residues: Ribonuclease P protein component (116 aa).

Belongs to the RnpA family. As to quaternary structure, consists of a catalytic RNA component (M1 or rnpB) and a protein subunit.

It carries out the reaction Endonucleolytic cleavage of RNA, removing 5'-extranucleotides from tRNA precursor.. RNaseP catalyzes the removal of the 5'-leader sequence from pre-tRNA to produce the mature 5'-terminus. It can also cleave other RNA substrates such as 4.5S RNA. The protein component plays an auxiliary but essential role in vivo by binding to the 5'-leader sequence and broadening the substrate specificity of the ribozyme. The sequence is that of Ribonuclease P protein component from Geobacillus sp. (strain WCH70).